Here is a 780-residue protein sequence, read N- to C-terminus: Gelsolin (780 aa).

An N-acetylmethionine; alternate modification is found at methionine 1. The first 25 residues, 1–25 (MAPYRSSLLCALLLLALCALSPSHA), serve as a signal peptide directing secretion. An actin-severing region spans residues 51 to 174 (VVEHPEFLKA…YKKGGVASGF (124 aa)). The Gelsolin-like 1 repeat unit spans residues 74-155 (FDLVPVPPNL…EVQGFESSTF (82 aa)). At tyrosine 84 the chain carries Phosphotyrosine. Residues glycine 90, aspartate 91, glutamate 122, aspartate 134, glycine 139, and alanine 141 each contribute to the Ca(2+) site. An actin-actin interfilament contact point region spans residues 121-124 (DESG). An a 1,2-diacyl-sn-glycero-3-phospho-(1D-myo-inositol-4,5-bisphosphate)-binding site is contributed by 160–167 (KSGLKYKK). Valine 170 contacts Ca(2+). Residue 186 to 194 (RLFQVKGRR) coordinates a 1,2-diacyl-sn-glycero-3-phospho-(1D-myo-inositol-4,5-bisphosphate). One copy of the Gelsolin-like 2 repeat lies at 196–268 (VRATEVPVSW…SEEGGEPEAM (73 aa)). Glycine 211 and aspartate 212 together coordinate Ca(2+). Residues cysteine 213 and cysteine 226 are joined by a disulfide bond. Glutamate 234 is a Ca(2+) binding site. Residues 244 to 269 (GIRDNERSGRAQVHVSEEGGEPEAML) form a disordered region. Residues aspartate 284, glutamate 327, aspartate 328, and glutamate 352 each coordinate Ca(2+). One copy of the Gelsolin-like 3 repeat lies at 315-387 (DENPFAQGAL…LPEGGETPLF (73 aa)). Tyrosine 407 and tyrosine 463 each carry phosphotyrosine. The interval 432–780 (AAQHGMDDDG…LDRALAELAA (349 aa)) is actin-binding, Ca-sensitive. The Gelsolin-like 4 repeat unit spans residues 453–534 (SNKVPVDPAT…VQGKEPAHLM (82 aa)). Ca(2+) is bound by residues glycine 469, aspartate 470, glutamate 500, aspartate 512, glycine 517, proline 519, and threonine 549. The stretch at 575-640 (RAVEVMPKSG…EEGSEPDAFW (66 aa)) is one Gelsolin-like 5 repeat. Lysine 582 carries the N6-acetyllysine modification. 2 residues coordinate Ca(2+): asparagine 589 and aspartate 590. Tyrosine 601 carries the phosphotyrosine modification. Glutamate 612 lines the Ca(2+) pocket. A Phosphotyrosine modification is found at tyrosine 649. The Gelsolin-like 6 repeat unit spans residues 679–754 (IEEVPGELMQ…VRQGFEPPSF (76 aa)). Ca(2+) contacts are provided by aspartate 694, aspartate 695, and glutamate 717. Threonine 740 carries the phosphothreonine modification.

Belongs to the villin/gelsolin family. As to quaternary structure, binds to actin and to fibronectin. Identified in a complex composed of ACTA1, COBL, GSN and TMSB4X. Interacts with the inactive form of EIF2AK2/PKR. Interacts with FLII. Post-translationally, phosphorylated on tyrosine residues in vitro.

Its subcellular location is the cytoplasm. The protein resides in the cytoskeleton. It is found in the secreted. Functionally, calcium-regulated, actin-modulating protein that binds to the plus (or barbed) ends of actin monomers or filaments, preventing monomer exchange (end-blocking or capping). It can promote the assembly of monomers into filaments (nucleation) as well as sever filaments already formed. Plays a role in ciliogenesis. The protein is Gelsolin (Gsn) of Mus musculus (Mouse).